The sequence spans 326 residues: MAMTGVVKDELSRLTVLKPCCRKAEVSTILRFTGGLHLVGGRIVIESELDTGVAARRLRKDIAEVFGHESEVLVLSPSGLRKGNRYVVRVIKEGESLARQTGLIDSNGRPVRGLPRHVVAGGVCDAESAWRGAFIAHGSLTEPGRSMSLEVTCPGPEAALALVGAARRLKVHAKAREVRGVDRVVVRDGDSISAMLTRLGAHQSVLAWEERRMRREVRATANRLANFDDANLRRSARAAVAAGARVQRALEILADDAPPHLVAAGKLRLKHKQASLEELGQLADPPLTKDAIAGRIRRLLAMADKRAADLGIPNTEASLTPDMLVP.

A DNA-binding region (H-T-H motif) is located at residues 275–308 (SLEELGQLADPPLTKDAIAGRIRRLLAMADKRAA).

The protein belongs to the WhiA family.

Involved in cell division and chromosome segregation. In Thermobifida fusca (strain YX), this protein is Probable cell division protein WhiA.